Consider the following 267-residue polypeptide: Trehalose-phosphate phosphatase (267 aa).

The Nucleophile role is filled by D20. D20, D22, and D198 together coordinate Mg(2+). D20 to D22 lines the substrate pocket.

This sequence belongs to the trehalose phosphatase family. It depends on Mg(2+) as a cofactor.

It catalyses the reaction alpha,alpha-trehalose 6-phosphate + H2O = alpha,alpha-trehalose + phosphate. Its pathway is glycan biosynthesis; trehalose biosynthesis. In terms of biological role, removes the phosphate from trehalose 6-phosphate to produce free trehalose. This chain is Trehalose-phosphate phosphatase (otsB), found in Salmonella typhimurium (strain LT2 / SGSC1412 / ATCC 700720).